The chain runs to 760 residues: Catalase-peroxidase (760 aa).

The interval 1-57 (MTDSQDNRTPESPQGVDRKAEGGCPVLHDGVTAQGSESENPAIDSPTPRTGGRPNSL) is disordered. The tryptophyl-tyrosyl-methioninium (Trp-Tyr) (with M-277) cross-link spans 129-251 (WHAAGTYRIH…LGAVQMGLIY (123 aa)). H130 acts as the Proton acceptor in catalysis. The segment at residues 251–277 (YVNPEGPNGNPDPLASARDIRETFARM) is a cross-link (tryptophyl-tyrosyl-methioninium (Tyr-Met) (with W-129)). A heme b-binding site is contributed by H292.

It belongs to the peroxidase family. Peroxidase/catalase subfamily. Homodimer or homotetramer. Requires heme b as cofactor. In terms of processing, formation of the three residue Trp-Tyr-Met cross-link is important for the catalase, but not the peroxidase activity of the enzyme.

The catalysed reaction is H2O2 + AH2 = A + 2 H2O. It carries out the reaction 2 H2O2 = O2 + 2 H2O. Its function is as follows. Bifunctional enzyme with both catalase and broad-spectrum peroxidase activity. The polypeptide is Catalase-peroxidase (Nocardioides sp. (strain ATCC BAA-499 / JS614)).